The following is a 358-amino-acid chain: Cyclin-dependent kinase 11 (358 aa).

In terms of domain architecture, Protein kinase spans 52 to 336; the sequence is FKKLYTINEG…ASDALKHPYF (285 aa). Residues 58–66 and lysine 81 contribute to the ATP site; that span reads INEGAFGVV. The active-site Proton acceptor is the aspartate 176.

This sequence belongs to the protein kinase superfamily. CMGC Ser/Thr protein kinase family. CDC2/CDKX subfamily.

It carries out the reaction L-seryl-[protein] + ATP = O-phospho-L-seryl-[protein] + ADP + H(+). It catalyses the reaction L-threonyl-[protein] + ATP = O-phospho-L-threonyl-[protein] + ADP + H(+). This Dictyostelium discoideum (Social amoeba) protein is Cyclin-dependent kinase 11 (cdk11).